The following is a 78-amino-acid chain: Short neurotoxin OH-46 (78 aa).

The N-terminal stretch at 1–21 (MKNLLLTFLVVTIVCLDLGYT) is a signal peptide. 4 disulfides stabilise this stretch: Cys-24/Cys-40, Cys-33/Cys-58, Cys-62/Cys-70, and Cys-71/Cys-76.

The protein belongs to the three-finger toxin family. Short-chain subfamily. As to expression, expressed by the venom gland.

It is found in the secreted. This three-finger toxin binds and inhibits the nicotinic acetylcholine receptor (nAChR). The polypeptide is Short neurotoxin OH-46 (Ophiophagus hannah (King cobra)).